Here is a 200-residue protein sequence, read N- to C-terminus: LexA repressor (200 aa).

Positions 29–48 (IRDIARAFRITPRGAIVHLN) form a DNA-binding region, H-T-H motif. Residues Ser120 and Lys158 each act as for autocatalytic cleavage activity in the active site.

The protein belongs to the peptidase S24 family. As to quaternary structure, homodimer.

It carries out the reaction Hydrolysis of Ala-|-Gly bond in repressor LexA.. Functionally, represses a number of genes involved in the response to DNA damage (SOS response), including recA and lexA. In the presence of single-stranded DNA, RecA interacts with LexA causing an autocatalytic cleavage which disrupts the DNA-binding part of LexA, leading to derepression of the SOS regulon and eventually DNA repair. This Pseudothermotoga lettingae (strain ATCC BAA-301 / DSM 14385 / NBRC 107922 / TMO) (Thermotoga lettingae) protein is LexA repressor.